The following is a 439-amino-acid chain: Xaa-Pro dipeptidase (439 aa).

The Mn(2+) site is built by Asp244, Asp255, His335, Glu380, and Glu419.

The protein belongs to the peptidase M24B family. Bacterial-type prolidase subfamily. The cofactor is Mn(2+).

It catalyses the reaction Xaa-L-Pro dipeptide + H2O = an L-alpha-amino acid + L-proline. Its function is as follows. Splits dipeptides with a prolyl residue in the C-terminal position. The sequence is that of Xaa-Pro dipeptidase from Shewanella sp. (strain MR-7).